Here is a 257-residue protein sequence, read N- to C-terminus: NAD kinase (257 aa).

Catalysis depends on Asp46, which acts as the Proton acceptor. Residues 46-47 (DG), 116-117 (NE), Asp146, Ala154, and 157-162 (TAYNLS) each bind NAD(+).

The protein belongs to the NAD kinase family. Requires a divalent metal cation as cofactor.

The protein localises to the cytoplasm. The catalysed reaction is NAD(+) + ATP = ADP + NADP(+) + H(+). Its function is as follows. Involved in the regulation of the intracellular balance of NAD and NADP, and is a key enzyme in the biosynthesis of NADP. Catalyzes specifically the phosphorylation on 2'-hydroxyl of the adenosine moiety of NAD to yield NADP. The polypeptide is NAD kinase (Mesorhizobium japonicum (strain LMG 29417 / CECT 9101 / MAFF 303099) (Mesorhizobium loti (strain MAFF 303099))).